The chain runs to 226 residues: NAD(P)H-quinone oxidoreductase subunit K, chloroplastic (226 aa).

Residues C43, C44, C108, and C139 each contribute to the [4Fe-4S] cluster site.

It belongs to the complex I 20 kDa subunit family. As to quaternary structure, NDH is composed of at least 16 different subunits, 5 of which are encoded in the nucleus. It depends on [4Fe-4S] cluster as a cofactor.

The protein resides in the plastid. It is found in the chloroplast thylakoid membrane. The enzyme catalyses a plastoquinone + NADH + (n+1) H(+)(in) = a plastoquinol + NAD(+) + n H(+)(out). It catalyses the reaction a plastoquinone + NADPH + (n+1) H(+)(in) = a plastoquinol + NADP(+) + n H(+)(out). In terms of biological role, NDH shuttles electrons from NAD(P)H:plastoquinone, via FMN and iron-sulfur (Fe-S) centers, to quinones in the photosynthetic chain and possibly in a chloroplast respiratory chain. The immediate electron acceptor for the enzyme in this species is believed to be plastoquinone. Couples the redox reaction to proton translocation, and thus conserves the redox energy in a proton gradient. The sequence is that of NAD(P)H-quinone oxidoreductase subunit K, chloroplastic from Lupinus luteus (European yellow lupine).